A 341-amino-acid polypeptide reads, in one-letter code: Probable galacturonosyltransferase-like 2 (341 aa).

Over 1–4 (MHSK) the chain is Cytoplasmic. The chain crosses the membrane as a helical; Signal-anchor for type II membrane protein span at residues 5–22 (FILYLSILAVFTVSFAGG). The Lumenal segment spans residues 23–341 (ERFKEAPKFF…LESRFDLIES (319 aa)). Residue Asn190 is glycosylated (N-linked (GlcNAc...) asparagine).

The protein belongs to the glycosyltransferase 8 family.

The protein resides in the golgi apparatus membrane. It functions in the pathway glycan metabolism; pectin biosynthesis. Functionally, may be involved in pectin and/or xylans biosynthesis in cell walls. The chain is Probable galacturonosyltransferase-like 2 (GATL2) from Arabidopsis thaliana (Mouse-ear cress).